Reading from the N-terminus, the 199-residue chain is dITP/XTP pyrophosphatase (199 aa).

Position 8-13 (8-13 (TSNINK)) interacts with substrate. Asp68 serves as the catalytic Proton acceptor. Asp68 provides a ligand contact to Mg(2+). Substrate is bound by residues Ser69, 155–158 (FGYN), Lys177, and 182–183 (HR).

The protein belongs to the HAM1 NTPase family. Homodimer. Mg(2+) serves as cofactor.

The enzyme catalyses XTP + H2O = XMP + diphosphate + H(+). The catalysed reaction is dITP + H2O = dIMP + diphosphate + H(+). It catalyses the reaction ITP + H2O = IMP + diphosphate + H(+). Its function is as follows. Pyrophosphatase that catalyzes the hydrolysis of nucleoside triphosphates to their monophosphate derivatives, with a high preference for the non-canonical purine nucleotides XTP (xanthosine triphosphate), dITP (deoxyinosine triphosphate) and ITP. Seems to function as a house-cleaning enzyme that removes non-canonical purine nucleotides from the nucleotide pool, thus preventing their incorporation into DNA/RNA and avoiding chromosomal lesions. This Borrelia recurrentis (strain A1) protein is dITP/XTP pyrophosphatase.